The chain runs to 329 residues: Protoheme IX farnesyltransferase (329 aa).

Helical transmembrane passes span 61 to 81 (LACTLGGGALAAAAAGVLNCL), 108 to 128 (AFLIAVALACGASLLLVAGVN), 130 to 150 (LAAGLSLLGLCSYVLLYTIVL), 158 to 178 (IVIGGVAGAIPPLVGAAAATG), 186 to 206 (WLFGLVMLWTPAHFWALALLL), 243 to 263 (LLGVLTLPSGGLFYGLMVLPF), and 284 to 304 (AKGLFRWSILYLFGICLLLLL).

This sequence belongs to the UbiA prenyltransferase family. Protoheme IX farnesyltransferase subfamily.

The protein resides in the cell inner membrane. It carries out the reaction heme b + (2E,6E)-farnesyl diphosphate + H2O = Fe(II)-heme o + diphosphate. The protein operates within porphyrin-containing compound metabolism; heme O biosynthesis; heme O from protoheme: step 1/1. Its function is as follows. Converts heme B (protoheme IX) to heme O by substitution of the vinyl group on carbon 2 of heme B porphyrin ring with a hydroxyethyl farnesyl side group. This chain is Protoheme IX farnesyltransferase, found in Synechococcus sp. (strain RCC307).